The sequence spans 84 residues: NADH-ubiquinone oxidoreductase chain 4L (84 aa).

2 consecutive transmembrane segments (helical) span residues 19–39 (ITLLIAIEILLLTVTLKLIHI) and 50–70 (IFSLIIIILAGAESAIGLSIL).

The protein belongs to the complex I subunit 4L family.

The protein resides in the mitochondrion membrane. It carries out the reaction a ubiquinone + NADH + 5 H(+)(in) = a ubiquinol + NAD(+) + 4 H(+)(out). Its function is as follows. Core subunit of the mitochondrial membrane respiratory chain NADH dehydrogenase (Complex I) that is believed to belong to the minimal assembly required for catalysis. Complex I functions in the transfer of electrons from NADH to the respiratory chain. The immediate electron acceptor for the enzyme is believed to be ubiquinone. This chain is NADH-ubiquinone oxidoreductase chain 4L (NAD4L), found in Candida albicans (strain SC5314 / ATCC MYA-2876) (Yeast).